A 307-amino-acid polypeptide reads, in one-letter code: Taste receptor type 2 member 41 (307 aa).

Over 1 to 7 (MQAALTA) the chain is Extracellular. A helical membrane pass occupies residues 8–28 (FFMLLFSLLSLLGIAANGFIV). Residues 29–40 (LVLGREWLRYGR) are Cytoplasmic-facing. A helical membrane pass occupies residues 41 to 61 (LLPLDMILISLGASRFCLQLV). Over 62 to 88 (GTVHNFYYSAQKVEYSGGLGRQFFHLH) the chain is Extracellular. A helical transmembrane segment spans residues 89–109 (WHFLNSATFWFCSWLSVLFCV). The Cytoplasmic portion of the chain corresponds to 110 to 129 (KIANITHPTFLWLKWRFPAW). A helical transmembrane segment spans residues 130 to 150 (VPWLLLGSVLISFIITLLFFW). Over 151 to 183 (VNYPAYQEFLIRKFSVNMTYKWNTRIETYYFPS) the chain is Extracellular. N-linked (GlcNAc...) asparagine glycosylation occurs at N167. A helical transmembrane segment spans residues 184-204 (LKLVIWSIPFSVFLVSIMLLI). The Cytoplasmic segment spans residues 205–234 (NSLRRHTQRMQHNGHSLQDPSTQAHTRALK). A helical membrane pass occupies residues 235–255 (SLISFLILYALSFLSLIIDAT). The Extracellular segment spans residues 256–264 (KFISMQNDF). The chain crosses the membrane as a helical span at residues 265–285 (YWPWQIAVYLCISIHPFILIF). Residues 286 to 307 (SNLKLRSVFSQLLLLARGFWVA) lie on the Cytoplasmic side of the membrane.

It belongs to the G-protein coupled receptor T2R family.

The protein localises to the membrane. Functionally, receptor that may play a role in the perception of bitterness and is gustducin-linked. May play a role in sensing the chemical composition of the gastrointestinal content. The activity of this receptor may stimulate alpha gustducin, mediate PLC-beta-2 activation and lead to the gating of TRPM5. In Pan paniscus (Pygmy chimpanzee), this protein is Taste receptor type 2 member 41 (TAS2R41).